The following is a 40-amino-acid chain: Photosystem II reaction center protein J (40 aa).

The chain crosses the membrane as a helical span at residues 8–28; it reads IPLWLVGTVAGILVIGLIGIF.

Belongs to the PsbJ family. In terms of assembly, PSII is composed of 1 copy each of membrane proteins PsbA, PsbB, PsbC, PsbD, PsbE, PsbF, PsbH, PsbI, PsbJ, PsbK, PsbL, PsbM, PsbT, PsbX, PsbY, PsbZ, Psb30/Ycf12, at least 3 peripheral proteins of the oxygen-evolving complex and a large number of cofactors. It forms dimeric complexes.

It localises to the plastid. Its subcellular location is the chloroplast thylakoid membrane. Its function is as follows. One of the components of the core complex of photosystem II (PSII). PSII is a light-driven water:plastoquinone oxidoreductase that uses light energy to abstract electrons from H(2)O, generating O(2) and a proton gradient subsequently used for ATP formation. It consists of a core antenna complex that captures photons, and an electron transfer chain that converts photonic excitation into a charge separation. This is Photosystem II reaction center protein J from Gnetum parvifolium (Small-leaved jointfir).